The sequence spans 963 residues: IQ motif and SEC7 domain-containing protein 1 (963 aa).

The interval 21-88 (SGVEGEAPSS…TRRPKLQHST (68 aa)) is disordered. The segment covering 29 to 38 (SSETGTSLDS) has biased composition (polar residues). Phosphoserine is present on residues serine 89, serine 105, and serine 107. Positions 134–163 (TRHAARTIQTAFRQYQMNKNFERLRSSMSE) constitute an IQ domain. Phosphoserine occurs at positions 180, 249, and 253. 2 disordered regions span residues 312 to 332 (LSPP…ESDL) and 349 to 513 (KEDK…RNSW). 2 stretches are compositionally biased toward basic and acidic residues: residues 366–376 (ERQEQRLRVEH) and 430–446 (LPRE…RPLD). Over residues 471 to 489 (DSINSTSNSNDTINCSSES) the composition is skewed to low complexity. 2 positions are modified to phosphoserine: serine 512 and serine 515. The region spanning 517–710 (AFSNDVIRKR…MGIYERIRKR (194 aa)) is the SEC7 domain. The 93-residue stretch at 774-866 (HQREIFLFND…LRESIAEVQE (93 aa)) folds into the PH domain. The stretch at 848–879 (QDRKKFTDDLRESIAEVQEMEKHRIESELEKQ) forms a coiled coil. Serine 892 carries the post-translational modification Phosphoserine. Position 911 is a phosphotyrosine (tyrosine 911). Residues 922-947 (LSSSLRDLSEAGKRGRRSSAGSLESN) form a disordered region. Serine 924 and serine 925 each carry phosphoserine.

It belongs to the BRAG family. In terms of assembly, interacts with ARF1 and ARF6. Interacts with GRIA2; the interaction is required for ARF6 activation. In terms of tissue distribution, expressed in brain, ovary, heart, lung, liver, kidney and leukocytes. Moderate expression was also detected in lung, skeletal muscle, placenta, small intestine, pancreas, spleen and testis.

It is found in the cytoplasm. Its subcellular location is the nucleus. The protein localises to the postsynaptic density. The protein resides in the cytoplasmic vesicle. It localises to the secretory vesicle. It is found in the synaptic vesicle. Functionally, guanine nucleotide exchange factor for ARF1 and ARF6. Guanine nucleotide exchange factor activity is enhanced by lipid binding. Accelerates GTP binding by ARFs of all three classes. Guanine nucleotide exchange protein for ARF6, mediating internalization of beta-1 integrin. Involved in neuronal development. In neurons, plays a role in the control of vesicle formation by endocytoc cargo. Upon long term depression, interacts with GRIA2 and mediates the activation of ARF6 to internalize synaptic AMPAR receptors. This chain is IQ motif and SEC7 domain-containing protein 1, found in Homo sapiens (Human).